The primary structure comprises 92 residues: Small ribosomal subunit protein uS19 (92 aa).

It belongs to the universal ribosomal protein uS19 family.

In terms of biological role, protein S19 forms a complex with S13 that binds strongly to the 16S ribosomal RNA. The chain is Small ribosomal subunit protein uS19 from Neisseria gonorrhoeae (strain ATCC 700825 / FA 1090).